Reading from the N-terminus, the 493-residue chain is Ecdysteroid UDP-glucosyltransferase (493 aa).

A signal peptide spans 1-17 (MIFILLTTLLAVGGAQT).

This sequence belongs to the UDP-glycosyltransferase family.

Its function is as follows. Catalyzes the transfer of glucose from UDP-glucose to ecdysteroids which are insect molting hormones. Expression of egt interferes with normal insect development and block molting. The protein is Ecdysteroid UDP-glucosyltransferase (egt) of Choristoneura fumiferana defective polyhedrosis virus (Cfdef).